The primary structure comprises 167 residues: Ureidoglycolate lyase (167 aa).

This sequence belongs to the ureidoglycolate lyase family. Homodimer. The cofactor is Ni(2+).

The catalysed reaction is (S)-ureidoglycolate = urea + glyoxylate. It functions in the pathway nitrogen metabolism; (S)-allantoin degradation. In terms of biological role, catalyzes the catabolism of the allantoin degradation intermediate (S)-ureidoglycolate, generating urea and glyoxylate. Involved in the utilization of allantoin as nitrogen source. The polypeptide is Ureidoglycolate lyase (Pseudomonas fluorescens (strain ATCC BAA-477 / NRRL B-23932 / Pf-5)).